The sequence spans 1174 residues: Carboxylic acid reductase (1174 aa).

AMP is bound by residues His297, Ser392, 413–414, Thr418, Asp491, 503–506, Lys512, and Lys612; these read EG and YLDR. In terms of domain architecture, Carrier spans 651-726; that stretch reads APVLVTVCRA…ALADYVEAAR (76 aa). Ser685 carries the O-(pantetheine 4'-phosphoryl)serine modification. NADP(+)-binding positions include 787–791, Arg814, Arg824, 854–855, 880–882, 919–920, Tyr956, and Lys960; these read TGFLG, DK, PAA, and TS.

It belongs to the ATP-dependent AMP-binding enzyme family. Carboxylic acid reductase subfamily. Requires pantetheine 4'-phosphate as cofactor.

It catalyses the reaction a carboxylate + ATP + NADPH + H(+) = an aldehyde + AMP + diphosphate + NADP(+). In terms of biological role, catalyzes the ATP- and NADPH-dependent reduction of carboxylic acids to the corresponding aldehydes. Catalyzes the reduction of a wide range of aliphatic fatty acids (C6-C18) into their corresponding aldehydes. Can also reduce benzoate to benzaldehyde. Has a preference for NADPH over NADH as the electron donor. The protein is Carboxylic acid reductase of Mycobacterium marinum (strain ATCC BAA-535 / M).